A 334-amino-acid chain; its full sequence is Mevalonate kinase (334 aa).

110–120 serves as a coordination point for ATP; the sequence is PVGAGLGSSAA. Catalysis depends on aspartate 161, which acts as the Proton acceptor.

This sequence belongs to the GHMP kinase family. Mevalonate kinase subfamily. Homodimer. Mg(2+) is required as a cofactor.

The protein localises to the cytoplasm. It catalyses the reaction (R)-mevalonate + ATP = (R)-5-phosphomevalonate + ADP + H(+). It functions in the pathway isoprenoid biosynthesis; isopentenyl diphosphate biosynthesis via mevalonate pathway; isopentenyl diphosphate from (R)-mevalonate: step 1/3. Catalyzes the phosphorylation of (R)-mevalonate (MVA) to (R)-mevalonate 5-phosphate (MVAP). Functions in the mevalonate (MVA) pathway leading to isopentenyl diphosphate (IPP), a key precursor for the biosynthesis of isoprenoid compounds such as archaeal membrane lipids. The polypeptide is Mevalonate kinase (Thermococcus onnurineus (strain NA1)).